Consider the following 423-residue polypeptide: Sporulation-regulated protein 28 (423 aa).

A Septin-type G domain is found at 28-342 (KGLQLSILLL…ENYRAKVLTE (315 aa)). The G1 motif stretch occupies residues 38–45 (GEKGSGKS). GTP is bound by residues 38 to 45 (GEKGSGKS), G124, 204 to 212 (KADGLTETE), and R291. The tract at residues 121–124 (LFPG) is G3 motif. Positions 203–206 (PKAD) are G4 motif. Over residues 360–381 (RGSVSNVSTRRNSASRTLGNPD) the composition is skewed to polar residues. The disordered stretch occupies residues 360 to 385 (RGSVSNVSTRRNSASRTLGNPDTNDE). The stretch at 384 to 417 (DENAYQIHKEIDEKNRIIEDYQRKIDLLEKMLAA) forms a coiled coil.

It belongs to the TRAFAC class TrmE-Era-EngA-EngB-Septin-like GTPase superfamily. Septin GTPase family. In terms of assembly, interacts with itself. Interacts with CDC11 and SPR3; probably to form a ring at the bud neck.

It localises to the membrane. The protein resides in the bud neck. In terms of biological role, septins are GTPases involved in cytokinesis that assemble into filaments and form a ring at the cleavage site. May act by recruiting MYO1 and HOF1, a protein involved in septation, to the site of cleavage. Septins are also involved in cell morphogenesis, bud site selection, chitin deposition, cell cycle regulation, cell compartmentalization and spore wall formation. This is Sporulation-regulated protein 28 (SPR28) from Saccharomyces cerevisiae (strain ATCC 204508 / S288c) (Baker's yeast).